The sequence spans 306 residues: Type 3 secretion system translocon protein SctB (306 aa).

A helical transmembrane segment spans residues 128-152 (LMIAMAVVSGIMAATSTVASAFSIA).

It belongs to the SctB/YopD family. As to quaternary structure, the core secretion machinery of the T3SS is composed of approximately 20 different proteins, including cytoplasmic components, a base, an export apparatus and a needle. This subunit is involved in the formation of a pore, called the translocon, in host membrane. Interacts with YopB/SctE and YopE. Together with YopB/SctE, forms a multimeric integral membrane complex with a mass of between 500 and 700 kDa. Interacts with its cognate chaperone SycD.

The protein localises to the secreted. Its subcellular location is the host membrane. Component of the type III secretion system (T3SS), also called injectisome, which is used to inject bacterial effector proteins into eukaryotic host cells. YopB/SctE and YopD/SctB are inserted into the host membrane where they form a pore and allow the translocation of effector proteins into the cytosol of target cells. Its function is as follows. Involved in pathogenesis. Essential for the establishment of Yersinia infections in a mouse model system, but not for the targeting of effector Yops. May modulate the host's immune response at a distance from the site of infection. This Yersinia enterocolitica protein is Type 3 secretion system translocon protein SctB.